We begin with the raw amino-acid sequence, 587 residues long: MGVNAVHWFRKGLRLHDNPALKECIQGADTIRCVYILDPWFAGSSNVGINRWRFLLQCLEDLDANLRKLNSRLLVIRGQPADVFPRLFKEWNITKLSIEYDSEPFGKERDAAIKKLATEAGVEVIVRISHTLYDLDKIIELNGGQPPLTYKRFQTLISKMEPLEIPVETITSEVIEKCTTPLSDDHDEKYGVPSLEELGFDTDGLSSAVWPGGETEALTRLERHLERRAWVANFERPRMNANSLLASPTGLSPYLRFGCLSCRLFYFKLTDLYKKVKKNSSPPLSLYGQLLWREFFYTAATNNPRFDKMEGNPICVQIPWDKNPEALAKWAEGRTGFPWIDAIMTQLRQEGWIHHLARHAVACFLTGSDLWISWEEGMKVFEELLLDADWSINAGSWMWLSCSSFFQQFFHCYCPVGFGRRTDPNGDYIRRYLPVLRGFPAKYIYDPWNAPEGIQKVAKCLIGVNYPKPMVNHAEASRLNIERMKQIYQQLSRYRGLGLLASVPSNPNGNGGLMGYTPGENIPNCSSSGSCSQGSGILHYAHGDSQQAHLLKQGSSSMGHGLSNGKRPSQEEDTQSIGPKVQRQSTN.

The region spanning 3-132 (VNAVHWFRKG…EVIVRISHTL (130 aa)) is the Photolyase/cryptochrome alpha/beta domain. Lys-11 is covalently cross-linked (Glycyl lysine isopeptide (Lys-Gly) (interchain with G-Cter in ubiquitin)). Residues 50 to 54 (NRWRF) carry the LIR 1 motif. Residue Ser-71 is modified to Phosphoserine; by AMPK. The short motif at 82 to 87 (DVFPRL) is the LIR 2 element. A Glycyl lysine isopeptide (Lys-Gly) (interchain with G-Cter in ubiquitin) cross-link involves residue Lys-107. An LIR 3 motif is present at residues 151-156 (KRFQTL). Residue Lys-159 forms a Glycyl lysine isopeptide (Lys-Gly) (interchain with G-Cter in ubiquitin) linkage. Ser-247 carries the post-translational modification Phosphoserine; by MAPK. Ser-252 lines the FAD pocket. Short sequence motifs (LIR) lie at residues 255–260 (LRFGCL) and 271–276 (DLYKKV). Ser-280 bears the Phosphoserine; by AMPK mark. Residues 285–290 (SLYGQL) carry the LIR 6 motif. Gln-289 is an FAD binding site. Lys-329 participates in a covalent cross-link: Glycyl lysine isopeptide (Lys-Gly) (interchain with G-Cter in ubiquitin). Positions 335–339 (TGFPW) match the LIR 7 motif. His-355 contributes to the FAD binding site. Residues 371–470 (WISWEEGMKV…LIGVNYPKPM (100 aa)) form a required for inhibition of CLOCK-BMAL1-mediated transcription region. The LIR 8 motif lies at 379–384 (KVFEEL). Residue 387 to 389 (DAD) coordinates FAD. Short sequence motifs (LIR) lie at residues 395–400 (GSWMWL), 411–416 (HCYCPV), and 430–435 (RRYLPV). The interval 471–493 (VNHAEASRLNIERMKQIYQQLSR) is interaction with TIMELESS. A Glycyl lysine isopeptide (Lys-Gly) (interchain with G-Cter in ubiquitin) cross-link involves residue Lys-485. 2 consecutive short sequence motifs (LIR) follow at residues 486–491 (QIYQQL) and 492–497 (SRYRGL). Residues 554–587 (GSSSMGHGLSNGKRPSQEEDTQSIGPKVQRQSTN) are disordered. A Phosphoserine modification is found at Ser-569.

This sequence belongs to the DNA photolyase class-1 family. As to quaternary structure, component of the circadian core oscillator, which includes the CRY proteins, CLOCK or NPAS2, BMAL1 or BMAL2, CSNK1D and/or CSNK1E, TIMELESS, and the PER proteins. Interacts directly with TIMELESS. Interacts directly with PER1, PER2 and PER3; interaction with PER2 inhibits its ubiquitination and vice versa. Interacts with FBXL21. Interacts with FBXL3. Interacts with CLOCK-BMAL1 independently of PER2 and DNA. Interacts with HDAC1, HDAC2 and SIN3B. Interacts with nuclear receptors AR, NR1D1, NR3C1/GR, RORA and RORC; the interaction with at least NR3C1/GR is ligand dependent. Interacts with PRKDC. Interacts with the G protein subunit alpha GNAS; the interaction may block GPCR-mediated regulation of cAMP concentrations. Interacts with PRMT5. Interacts with EZH2. Interacts with MYBBP1A, DOCK7, HNRNPU, RPL7A, RPL8 and RPS3. Interacts with PPP5C (via TPR repeats). Interacts with MAP1LC3B. Interacts with CLOCK. Interacts with BMAL1. Interacts weakly with HDAC3; this interaction is enhanced in the presence of FBXL3. Interacts with TRIM28, KCTD5 and DDB1 Interacts with HNF4A. Interacts with PSMD2 in a KDM8-dependent manner. Interacts with KDM8 in a FBXL3-dependent manner. Interacts with PPARG in a ligand-dependent manner. Interacts with PPARD (via domain NR LBD) and NR1I2 (via domain NR LBD) in a ligand-dependent manner. Interacts with PPARA, NR1I3 and VDR. FAD serves as cofactor. Requires (6R)-5,10-methylene-5,6,7,8-tetrahydrofolate as cofactor. Phosphorylation on Ser-247 by MAPK is important for the inhibition of CLOCK-BMAL1-mediated transcriptional activity. Phosphorylation by CSNK1E requires interaction with PER1 or PER2. Phosphorylation at Ser-71 and Ser-280 by AMPK decreases protein stability. Phosphorylation at Ser-569 exhibits a robust circadian rhythm with a peak at CT8, increases protein stability, prevents SCF(FBXL3)-mediated degradation and is antagonized by interaction with PRKDC. Post-translationally, ubiquitinated by the SCF(FBXL3) and SCF(FBXL21) complexes, regulating the balance between degradation and stabilization. The SCF(FBXL3) complex is mainly nuclear and mediates ubiquitination and subsequent degradation of CRY1. In contrast, cytoplasmic SCF(FBXL21) complex-mediated ubiquitination leads to stabilize CRY1 and counteract the activity of the SCF(FBXL3) complex. The SCF(FBXL3) and SCF(FBXL21) complexes probably mediate ubiquitination at different Lys residues. Ubiquitination at Lys-11 and Lys-107 are specifically ubiquitinated by the SCF(FBXL21) complex but not by the SCF(FBXL3) complex. Ubiquitination may be inhibited by PER2. Deubiquitinated by USP7. In terms of processing, undergoes autophagy-mediated degradation in the liver in a time-dependent manner. Autophagic degradation of CRY1 (an inhibitor of gluconeogenesis) occurs during periods of reduced feeding allowing induction of gluconeogenesis and maintenance of blood glucose levels. As to expression, expressed in all tissues tested including spleen, liver, skeletal muscle, kidney, brain, intestine, eye, harderian gland, liver and heart. Highest levels in the eye, brain, kidney and harderian gland. In the brain, especially located to the suprachiasma nucleus (SCN).

Its subcellular location is the cytoplasm. The protein localises to the nucleus. Its function is as follows. Transcriptional repressor which forms a core component of the circadian clock. The circadian clock, an internal time-keeping system, regulates various physiological processes through the generation of approximately 24 hour circadian rhythms in gene expression, which are translated into rhythms in metabolism and behavior. It is derived from the Latin roots 'circa' (about) and 'diem' (day) and acts as an important regulator of a wide array of physiological functions including metabolism, sleep, body temperature, blood pressure, endocrine, immune, cardiovascular, and renal function. Consists of two major components: the central clock, residing in the suprachiasmatic nucleus (SCN) of the brain, and the peripheral clocks that are present in nearly every tissue and organ system. Both the central and peripheral clocks can be reset by environmental cues, also known as Zeitgebers (German for 'timegivers'). The predominant Zeitgeber for the central clock is light, which is sensed by retina and signals directly to the SCN. The central clock entrains the peripheral clocks through neuronal and hormonal signals, body temperature and feeding-related cues, aligning all clocks with the external light/dark cycle. Circadian rhythms allow an organism to achieve temporal homeostasis with its environment at the molecular level by regulating gene expression to create a peak of protein expression once every 24 hours to control when a particular physiological process is most active with respect to the solar day. Transcription and translation of core clock components (CLOCK, NPAS2, BMAL1, BMAL2, PER1, PER2, PER3, CRY1 and CRY2) plays a critical role in rhythm generation, whereas delays imposed by post-translational modifications (PTMs) are important for determining the period (tau) of the rhythms (tau refers to the period of a rhythm and is the length, in time, of one complete cycle). A diurnal rhythm is synchronized with the day/night cycle, while the ultradian and infradian rhythms have a period shorter and longer than 24 hours, respectively. Disruptions in the circadian rhythms contribute to the pathology of cardiovascular diseases, cancer, metabolic syndromes and aging. A transcription/translation feedback loop (TTFL) forms the core of the molecular circadian clock mechanism. Transcription factors, CLOCK or NPAS2 and BMAL1 or BMAL2, form the positive limb of the feedback loop, act in the form of a heterodimer and activate the transcription of core clock genes and clock-controlled genes (involved in key metabolic processes), harboring E-box elements (5'-CACGTG-3') within their promoters. The core clock genes: PER1/2/3 and CRY1/2 which are transcriptional repressors form the negative limb of the feedback loop and interact with the CLOCK|NPAS2-BMAL1|BMAL2 heterodimer inhibiting its activity and thereby negatively regulating their own expression. This heterodimer also activates nuclear receptors NR1D1/2 and RORA/B/G, which form a second feedback loop and which activate and repress BMAL1 transcription, respectively. CRY1 and CRY2 have redundant functions but also differential and selective contributions at least in defining the pace of the SCN circadian clock and its circadian transcriptional outputs. More potent transcriptional repressor in cerebellum and liver than CRY2, though more effective in lengthening the period of the SCN oscillator. On its side, CRY2 seems to play a critical role in tuning SCN circadian period by opposing the action of CRY1. With CRY2, is dispensable for circadian rhythm generation but necessary for the development of intercellular networks for rhythm synchrony. Capable of translocating circadian clock core proteins such as PER proteins to the nucleus. Interacts with CLOCK-BMAL1 independently of PER proteins and is found at CLOCK-BMAL1-bound sites, suggesting that CRY may act as a molecular gatekeeper to maintain CLOCK-BMAL1 in a poised and repressed state until the proper time for transcriptional activation. Represses the CLOCK-BMAL1 induced transcription of BHLHE40/DEC1, ATF4, MTA1, KLF10 and NAMPT. May repress circadian target genes expression in collaboration with HDAC1 and HDAC2 through histone deacetylation. Mediates the clock-control activation of ATR and modulates ATR-mediated DNA damage checkpoint. In liver, mediates circadian regulation of cAMP signaling and gluconeogenesis by binding to membrane-coupled G proteins and blocking glucagon-mediated increases in intracellular cAMP concentrations and CREB1 phosphorylation. Inhibits hepatic gluconeogenesis by decreasing nuclear FOXO1 levels that down-regulates gluconeogenic gene expression. Besides its role in the maintenance of the circadian clock, is also involved in the regulation of other processes. Represses glucocorticoid receptor NR3C1/GR-induced transcriptional activity by binding to glucocorticoid response elements (GREs). Plays a key role in glucose and lipid metabolism modulation, in part, through the transcriptional regulation of genes involved in these pathways, such as LEP or ACSL4. Represses PPARD and its target genes in the skeletal muscle and limits exercise capacity. Plays an essential role in the generation of circadian rhythms in the retina. Represses the transcriptional activity of NR1I2. The chain is Cryptochrome-1 (CRY1) from Spalax judaei (Judean Mountains blind mole rat).